The primary structure comprises 71 residues: Small ribosomal subunit protein bS21 (71 aa).

The protein belongs to the bacterial ribosomal protein bS21 family.

This chain is Small ribosomal subunit protein bS21, found in Wigglesworthia glossinidia brevipalpis.